Here is a 461-residue protein sequence, read N- to C-terminus: Metacaspase-1 (461 aa).

Composition is skewed to gly residues over residues 1-21 (MSYP…GYGG), 45-66 (QYGG…GYGP), 74-86 (QYGG…GYGP), and 105-119 (PGGQ…GHPG). Positions 1–154 (MSYPGQGGNT…PQGNQAFGGT (154 aa)) are disordered. Low complexity-rich tracts occupy residues 121–131 (GNQAPPGQYGQ) and 138–148 (HGNHNMPPQGN). Catalysis depends on residues His-252 and Cys-308.

The protein belongs to the peptidase C14B family.

Involved in cell death (apoptosis). The sequence is that of Metacaspase-1 (MCA1) from Yarrowia lipolytica (strain CLIB 122 / E 150) (Yeast).